Reading from the N-terminus, the 117-residue chain is Hemerythrin subunit alpha (117 aa).

Residues His24, His53, Glu57, His72, His76, His105, and Asp110 each coordinate Fe cation.

It belongs to the hemerythrin family. As to quaternary structure, octamer composed of two types of chains: alpha and beta.

Its function is as follows. Hemerythrin is a respiratory protein in blood cells of certain marine worms. The oxygen-binding site in each chain contains two iron atoms. The protein is Hemerythrin subunit alpha of Lingula anatina (Brachiopod).